A 1445-amino-acid polypeptide reads, in one-letter code: ABC-type transporter FGSG_00046 (1445 aa).

Helical transmembrane passes span 21-41 (LFEE…MLLV), 77-97 (LILW…AAAL), 119-138 (PSSL…VTRV), 150-170 (ISIL…FESL), 187-207 (EIVG…FILG), 255-277 (TLLR…PLLL), 297-317 (YGLI…TALA), 368-388 (LQFV…IFLL), 392-412 (VALG…GTVL), 481-501 (VFST…YVLM), and 520-540 (SLFS…PAIF). In terms of domain architecture, ABC transmembrane type-1 1 spans 259–541 (GGLCRLFTAL…FLTSVPAIFS (283 aa)). The ABC transporter 1 domain occupies 595–821 (IRDGSVRWKG…DEIEASTYSR (227 aa)). ATP is bound at residue 627–634 (GSVGSGKS). The disordered stretch occupies residues 803 to 850 (RNTQKDMQDDEIEASTYSREQNGPKKQEEDANHESNQSPETSQEHELA). Residues 824–835 (NGPKKQEEDANH) are compositionally biased toward basic and acidic residues. A run of 6 helical transmembrane segments spans residues 868 to 888 (GMGF…WQNF), 912 to 932 (IGVY…VTWF), 1004 to 1024 (IPLT…QLVM), 1026 to 1046 (SIGT…LAII), 1116 to 1136 (LTLV…GVTI), and 1147 to 1167 (IGLA…LLTW). Residues 974–1173 (HRAPMSYFES…LLTWWTMMEA (200 aa)) form the ABC transmembrane type-1 2 domain. The region spanning 1210-1441 (IELKELSASY…DVSLFQDLFS (232 aa)) is the ABC transporter 2 domain. Residue 1244-1251 (GRTGSGKT) participates in ATP binding.

It belongs to the ABC transporter superfamily. ABCC family.

Its subcellular location is the cell membrane. Its function is as follows. ABC-type transporter; part of the gene cluster that mediates the biosynthesis of gramillins A and B, bicyclic lipopeptides that induce cell death in maize leaves but not in wheat leaves. May be involved in the secretion of gramillins. The protein is ABC-type transporter FGSG_00046 of Gibberella zeae (strain ATCC MYA-4620 / CBS 123657 / FGSC 9075 / NRRL 31084 / PH-1) (Wheat head blight fungus).